The chain runs to 156 residues: Small ribosomal subunit protein uS7 (156 aa).

Belongs to the universal ribosomal protein uS7 family. As to quaternary structure, part of the 30S ribosomal subunit. Contacts proteins S9 and S11.

In terms of biological role, one of the primary rRNA binding proteins, it binds directly to 16S rRNA where it nucleates assembly of the head domain of the 30S subunit. Is located at the subunit interface close to the decoding center, probably blocks exit of the E-site tRNA. The polypeptide is Small ribosomal subunit protein uS7 (Paenarthrobacter aurescens (strain TC1)).